A 448-amino-acid chain; its full sequence is N-succinylarginine dihydrolase (448 aa).

Residues 19–28 (GGLSYGNVAS), N110, and 137–138 (HR) each bind substrate. Residue E174 is part of the active site. R214 provides a ligand contact to substrate. H250 is an active-site residue. Substrate is bound by residues D252 and N365. C371 acts as the Nucleophile in catalysis.

This sequence belongs to the succinylarginine dihydrolase family. As to quaternary structure, homodimer.

It catalyses the reaction N(2)-succinyl-L-arginine + 2 H2O + 2 H(+) = N(2)-succinyl-L-ornithine + 2 NH4(+) + CO2. Its pathway is amino-acid degradation; L-arginine degradation via AST pathway; L-glutamate and succinate from L-arginine: step 2/5. Functionally, catalyzes the hydrolysis of N(2)-succinylarginine into N(2)-succinylornithine, ammonia and CO(2). This is N-succinylarginine dihydrolase from Pseudomonas fluorescens (strain ATCC BAA-477 / NRRL B-23932 / Pf-5).